The primary structure comprises 30 residues: GSVIKCGESCLLGKCYTPGCTCSRPICKKN.

A cross-link (cyclopeptide (Gly-Asn)) is located at residues 1–30 (GSVIKCGESCLLGKCYTPGCTCSRPICKKN). 3 cysteine pairs are disulfide-bonded: C6–C20, C10–C22, and C15–C27.

In terms of processing, contains 3 disulfide bonds. Post-translationally, this is a cyclic peptide. In terms of tissue distribution, expressed in root nodules but not in seed.

Functionally, probably participates in a plant defense mechanism. Active against Gram-negative bacterium E.coli ATCC 700926 (MIC=0.6 uM) under low-salt conditions. Not active against Gram-positive bacterium S.aureus ATCC 12600 up to a concentration of 100 uM under low-salt conditions. Exhibits immunomodulatory activity but no cytotoxicity in vitro. The chain is Cliotide T19 from Clitoria ternatea (Butterfly pea).